Consider the following 171-residue polypeptide: Ribosome maturation factor RimM (171 aa).

The PRC barrel domain occupies 97–169 (DGEFYYHEII…RVDVDIMEGL (73 aa)).

Belongs to the RimM family. In terms of assembly, binds ribosomal protein uS19.

It localises to the cytoplasm. Functionally, an accessory protein needed during the final step in the assembly of 30S ribosomal subunit, possibly for assembly of the head region. Essential for efficient processing of 16S rRNA. May be needed both before and after RbfA during the maturation of 16S rRNA. It has affinity for free ribosomal 30S subunits but not for 70S ribosomes. The protein is Ribosome maturation factor RimM of Lactococcus lactis subsp. cremoris (strain MG1363).